We begin with the raw amino-acid sequence, 232 residues long: Dehydrin DHN3 (232 aa).

Residues 1 to 14 are compositionally biased toward polar residues; that stretch reads MSQYQNQYGAQTGM. Disordered regions lie at residues 1-66 and 140-232; these read MSQY…QHRG and EHHG…CTGH. The span at 49–60 shows a compositional bias: gly residues; it reads TTGGATGQGHGH. Residues 140-157 show a composition bias toward basic and acidic residues; that stretch reads EHHGDKKGVMDKIKEKIP. Over residues 159-168 the composition is skewed to polar residues; that stretch reads TEQSRTNTDG. The span at 198-223 shows a compositional bias: basic and acidic residues; it reads EQQDVHHGDEQHGEKKGIMEKIKEKL.

It belongs to the plant dehydrin family.

The sequence is that of Dehydrin DHN3 (DHN3) from Pisum sativum (Garden pea).